The chain runs to 139 residues: uncharacterized protein (139 aa).

Residues 77-97 (YCFFFFLVLFLNGIIATRGKA) form a helical membrane-spanning segment.

The protein resides in the mitochondrion membrane. This is an uncharacterized protein from Arabidopsis thaliana (Mouse-ear cress).